We begin with the raw amino-acid sequence, 166 residues long: Calmodulin-like protein 5 (166 aa).

EF-hand domains lie at Glu11 to Thr46, Pro47 to Arg82, Ala96 to Lys131, and Leu132 to Gln166. 14 residues coordinate Ca(2+): Asp24, Asp26, Asp28, Cys30, Glu35, Asp60, Asp62, Asn64, Thr66, Glu71, Asp109, Asp111, Asp113, and Glu120. At Lys131 the chain carries N6,N6,N6-trimethyllysine. The Ca(2+) site is built by Asp145, Asp147, Asp149, Gln151, and Glu156.

This sequence belongs to the calmodulin family.

Potential calcium sensor. The protein is Calmodulin-like protein 5 (CML5) of Oryza sativa subsp. japonica (Rice).